Here is a 344-residue protein sequence, read N- to C-terminus: Glucan endo-1,3-beta-glucosidase (344 aa).

Positions Met1–Ala27 are cleaved as a signal peptide. Residue Glu123 is the Proton donor of the active site. Glu268 (nucleophile) is an active-site residue.

The protein belongs to the glycosyl hydrolase 17 family.

The enzyme catalyses Hydrolysis of (1-&gt;3)-beta-D-glucosidic linkages in (1-&gt;3)-beta-D-glucans.. Implicated in the defense of plants against pathogens. This chain is Glucan endo-1,3-beta-glucosidase, found in Vitis vinifera (Grape).